Here is a 423-residue protein sequence, read N- to C-terminus: Serine hydroxymethyltransferase 2 (423 aa).

(6S)-5,6,7,8-tetrahydrofolate is bound by residues Leu121 and 125–127 (GHL). At Lys230 the chain carries N6-(pyridoxal phosphate)lysine. 356–358 (SPF) provides a ligand contact to (6S)-5,6,7,8-tetrahydrofolate.

This sequence belongs to the SHMT family. As to quaternary structure, homodimer. It depends on pyridoxal 5'-phosphate as a cofactor.

The protein localises to the cytoplasm. It carries out the reaction (6R)-5,10-methylene-5,6,7,8-tetrahydrofolate + glycine + H2O = (6S)-5,6,7,8-tetrahydrofolate + L-serine. The protein operates within one-carbon metabolism; tetrahydrofolate interconversion. Its pathway is amino-acid biosynthesis; glycine biosynthesis; glycine from L-serine: step 1/1. Functionally, catalyzes the reversible interconversion of serine and glycine with tetrahydrofolate (THF) serving as the one-carbon carrier. This reaction serves as the major source of one-carbon groups required for the biosynthesis of purines, thymidylate, methionine, and other important biomolecules. Also exhibits THF-independent aldolase activity toward beta-hydroxyamino acids, producing glycine and aldehydes, via a retro-aldol mechanism. In Pectobacterium atrosepticum (strain SCRI 1043 / ATCC BAA-672) (Erwinia carotovora subsp. atroseptica), this protein is Serine hydroxymethyltransferase 2.